A 283-amino-acid chain; its full sequence is Thymidylate synthase (283 aa).

Residue Arg22 participates in dUMP binding. Catalysis depends on Cys160, which acts as the Nucleophile. DUMP is bound by residues 180 to 183, Asn191, and 221 to 223; these read RSCD and HIY. (6R)-5,10-methylene-5,6,7,8-tetrahydrofolate is bound at residue Asp183. Ser282 provides a ligand contact to (6R)-5,10-methylene-5,6,7,8-tetrahydrofolate.

Belongs to the thymidylate synthase family. Bacterial-type ThyA subfamily. Homodimer.

The protein resides in the cytoplasm. The catalysed reaction is dUMP + (6R)-5,10-methylene-5,6,7,8-tetrahydrofolate = 7,8-dihydrofolate + dTMP. It functions in the pathway pyrimidine metabolism; dTTP biosynthesis. Catalyzes the reductive methylation of 2'-deoxyuridine-5'-monophosphate (dUMP) to 2'-deoxythymidine-5'-monophosphate (dTMP) while utilizing 5,10-methylenetetrahydrofolate (mTHF) as the methyl donor and reductant in the reaction, yielding dihydrofolate (DHF) as a by-product. This enzymatic reaction provides an intracellular de novo source of dTMP, an essential precursor for DNA biosynthesis. This is Thymidylate synthase from Pseudoalteromonas translucida (strain TAC 125).